The primary structure comprises 122 residues: LYR motif-containing protein 1 (122 aa).

The protein belongs to the complex I LYR family.

The sequence is that of LYR motif-containing protein 1 (lyrm1) from Xenopus laevis (African clawed frog).